We begin with the raw amino-acid sequence, 450 residues long: Probable malate:quinone oxidoreductase (450 aa).

Belongs to the MQO family. FAD is required as a cofactor.

The enzyme catalyses (S)-malate + a quinone = a quinol + oxaloacetate. Its pathway is carbohydrate metabolism; tricarboxylic acid cycle; oxaloacetate from (S)-malate (quinone route): step 1/1. In Helicobacter acinonychis (strain Sheeba), this protein is Probable malate:quinone oxidoreductase.